Reading from the N-terminus, the 558-residue chain is Solute carrier family 22 member 6-A (558 aa).

The Cytoplasmic portion of the chain corresponds to 1–15; it reads MSFAELLERTGGMGR. The helical transmembrane segment at 16-36 threads the bilayer; sequence FQITQVALMCFPILLMASHNL. The Extracellular portion of the chain corresponds to 37–140; it reads LQNFSAAIPD…LVCGHKNRRQ (104 aa). The chain crosses the membrane as a helical span at residues 141–161; it reads LAQSVYMGGVLVGAIILGGLS. Residues 162–167 are Cytoplasmic-facing; the sequence is DRYGRR. Residues 168–188 form a helical membrane-spanning segment; that stretch reads ALLIWSYFQMAVSGLCSAFSP. Topologically, residues 189 to 197 are extracellular; sequence NYLSYCIFR. Residues 198–218 form a helical membrane-spanning segment; it reads FLTGMALSGIGLNTTALIVEW. Residues 219-225 are Cytoplasmic-facing; that stretch reads VPTRVRT. The chain crosses the membrane as a helical span at residues 226–246; it reads ITGTLAGFSYTVGQLLLAGLA. Residues 247-253 lie on the Extracellular side of the membrane; the sequence is YAMRDWR. The helical transmembrane segment at 254–274 threads the bilayer; that stretch reads WLQLCVSLPFFIFFLYSWWFP. Residues 275 to 342 are Cytoplasmic-facing; sequence ESARWLVLSG…DLIRTSTIRR (68 aa). Residues 343–363 traverse the membrane as a helical segment; it reads ISCALSLVWFSTSFAYYGLAM. Topologically, residues 364-369 are extracellular; that stretch reads DLQNFN. A helical membrane pass occupies residues 370 to 390; the sequence is VSIYLIQVIFGAVDFPAKIFS. The Cytoplasmic portion of the chain corresponds to 391–400; the sequence is TTAMIYVGRK. The chain crosses the membrane as a helical span at residues 401–421; sequence FTQLMSLILGGVVILANSFVP. The Extracellular segment spans residues 422–428; sequence HEMQTVR. The chain crosses the membrane as a helical span at residues 429-449; sequence TGMAVFGKGCLAASFSCVFLY. At 450 to 462 the chain is on the cytoplasmic side; that stretch reads TTELYPTVIRQSG. The helical transmembrane segment at 463-483 threads the bilayer; the sequence is LGLCSTMARIGGIVAPLVKIL. At 484 to 488 the chain is on the extracellular side; sequence GEYYP. Residues 489–509 form a helical membrane-spanning segment; that stretch reads FLPLVIYGGAPIISGLCVFFL. Residues 510–558 are Cytoplasmic-facing; it reads PETVNKPLPDTIEEVEKRIKAPKKENEMNEIVSLKKKEGMKENPVNDVL. A compositionally biased stretch (basic and acidic residues) spans 539 to 550; that stretch reads EIVSLKKKEGMK. A disordered region spans residues 539–558; the sequence is EIVSLKKKEGMKENPVNDVL.

It belongs to the major facilitator (TC 2.A.1) superfamily. Organic cation transporter (TC 2.A.1.19) family. Post-translationally, glycosylated. Glycosylation is necessary for proper targeting of the transporter to the plasma membrane.

It localises to the cell membrane. It is found in the basolateral cell membrane. The protein localises to the basal cell membrane. Its function is as follows. Involved in the renal elimination of endogenous and exogenous organic anions. Mediates the sodium-independent uptake of p-aminohippurate (PAH), 2,3-dimercapto-1-propanesulfonic acid (DMPS), cidofovir, adefovir, 9-(2-phosphonylmethoxyethyl) guanine (PMEG), 9-(2-phosphonylmethoxyethyl) diaminopurine (PMEDAP), ochratoxin (OTA), acyclovir (ACV), 3'-azido-3-'deoxythymidine (AZT), cimetidine (CMD), 2,4-dichloro-phenoxyacetate (2,4-D), hippurate (HA), indoleacetate (IA), indoxyl sulfate (IS) and 3-carboxy-4-methyl-5-propyl-2-furanpropionate (CMPF) and edaravone sulfate. PAH uptake is inhibited by p-chloromercuribenzenesulphonate (PCMBS), diethyl pyrocarbonate (DEPC), indomethacin, sulindac, diclofenac, carprofen, okadaic acid, benzothiazolylcysteine (BTC), S-chlorotrifluoroethylcysteine (CTFC), cysteine S-conjugates S-dichlorovinylcysteine (DCVC), furosemide, steviol, phorbol 12-myristate 13-acetate (PMA), calcium ionophore A23187, benzylpenicillin, bumetamide, losartan, probenecid, phenol red, urate, glutarate and alpha-ketoglutarate. This chain is Solute carrier family 22 member 6-A (slc22a6-a), found in Xenopus laevis (African clawed frog).